The following is an 892-amino-acid chain: MSKPDEYLSSNSVPLPPQDADVLTTACDYCIVACGYKVYRWPVGKEGGAKASENALGADFPHQMMMGAWASPAQHNVVSYRDQPHHVVVIADKDATVVNPGGNHSIRGGTLAEKCYNPSNRTRERLQHPMIRVNGKLTPVSWDLATEVMADISQYIIAKYGEHAWAVKSHSYQYFENVYAITKLAMTSIGTPAFAWHDKCSATNDATGLDDAGIDSFASSYEDWADCEVAFLSGVDPYETKTTLFTSHMMPGDKKFVFVTPHMTMGVAWSVKAGRGLWLPIIPGTDTVLHMALARIIIENDWQDQPFIDKWIANSWEVDSGYGRGTRNTGWQWRTTWGTWQSDWQDYRKFILAQEESKLDVAAQITGLSADDIRTAAEWIAKPKADGSHPKTSFMCEKGNYWSNNYMNSASFASLGLICGSGNRKGRMISRGGGHQRGGLSAGGNSEWLSPEKYPGRRKKSFNLDLWLMEGNIRFAWVIGTTWVAAMMGSNALEAKMRSLTAESPHQIKSLDRAAIFETLKARVDSGGMVMANSDLYPVVPVGTDFADIVYPVASWGEDNFTRCNSERRLRLYSKFYDAPGEAKPDWWIVQKFAQKMGLDKDGGYSWKDSNDVFEEVARFSRDGVLNYHPLAEKAKASGIKAQELLRGYGTTGIQTPIRERGGELVGTVRLHDPDNDWGEIEGSTVHTKALVAFNTHSGKAILLKSPWQYAGWIQFYEAIKPRAAKGEVWVTNGRVNETWQSGFDDRRKPYLSQRWPEGFIFINPEDARKKGIESGDYVEVVNDTVYIQTGQPQGVLDADLTFNQLMADGHIKITTGRFKTIAVVSDEMRPGVCQANFNVPSSPANAVVSAVPDPMTNNYRYKLGRGVLNKVGESPYKHNFTQMSLKPRNIV.

[3Fe-4S] cluster-binding residues include Cys27, Cys30, and Cys34. The span at 431–442 (RGGGHQRGGLSA) shows a compositional bias: gly residues. Residues 431–452 (RGGGHQRGGLSAGGNSEWLSPE) form a disordered region.

This sequence belongs to the prokaryotic molybdopterin-containing oxidoreductase family. In terms of assembly, the iodate reductase (Idr) complex is composed of a molybdopterin-dependent iodate reductase (IdrA and IdrB subunits) and two associated peroxidases (IdrP1 and IdrP2). The cofactor is [3Fe-4S] cluster. It depends on Mo-bis(molybdopterin guanine dinucleotide) as a cofactor.

The protein resides in the periplasm. Its function is as follows. Involved in iodate respiration. Probably catalyzes the reduction of iodate (IO(3)(-)) to hypoiodous acid (HIO) and H(2)O(2), using a reduced cytochrome c as the electron donor. The protein is Iodate reductase subunit IdrA of Pseudomonas sp. (strain SCT).